The primary structure comprises 368 residues: Alanine racemase 3 (368 aa).

The active-site Proton acceptor; specific for D-alanine is the Lys42. Residue Lys42 is modified to N6-(pyridoxal phosphate)lysine. Arg141 is a binding site for substrate. Tyr262 serves as the catalytic Proton acceptor; specific for L-alanine. Met310 provides a ligand contact to substrate.

It belongs to the alanine racemase family. Pyridoxal 5'-phosphate serves as cofactor.

It catalyses the reaction L-alanine = D-alanine. It participates in amino-acid biosynthesis; D-alanine biosynthesis; D-alanine from L-alanine: step 1/1. Its function is as follows. Catalyzes the interconversion of L-alanine and D-alanine. May also act on other amino acids. The sequence is that of Alanine racemase 3 (alr3) from Salmonella typhi.